A 416-amino-acid chain; its full sequence is Proline-serine-threonine phosphatase-interacting protein 1 (416 aa).

In terms of domain architecture, F-BAR spans 5–264; it reads LQFKDAFWCR…TLEGCSIDAD (260 aa). A coiled-coil region spans residues 166–212; it reads HQKQVEKSQNKARQCKDSATEAERVYRQSIAQLEKVRAEWEQEHRTT. At S318 the chain carries Phosphoserine. The residue at position 345 (Y345) is a Phosphotyrosine. The region spanning 359–416 is the SH3 domain; the sequence is SPAQEYRALYDYTAQNPDELDLSAGDILEVILEGEDGWWTVERNGQRGFVPGSYLEKL.

Homodimer. Homotrimer. Interacts (via coiled-coil domain) with CD2AP, PTPN12 and PTPN18. Interacts (via SH3 domain) with ABL1 and WAS. Interacts (via SH3 and coiled-coil domains) with MEFV (via B-box zinc finger); the interaction allows binding of MEFV to PYCARD and facilitates formation of PYCARD pyroptosomes. Interacts with CD2, DNM2 and FASLG. Dephosphorylated on Tyr-345 by PTPN18, this event negatively regulates the association of PSTPIP1 with SH2 domain-containing proteins as tyrosine kinase. Phosphorylation of Tyr-345 is probably required for subsequent phosphorylation at other tyrosine residues. Phosphorylation is induced by activation of the EGFR and PDGFR in a ABL1 dependent manner. The phosphorylation regulates the interaction with WAS and with MEFV. Highly expressed in the peripheral blood leukocytes, granulocytes and monocytes, namely in T-cells and natural killer cells, and in spleen. Weakly expressed in the thymus, small intestine, lung and placenta.

The protein localises to the cytoplasm. Its subcellular location is the cell membrane. The protein resides in the cell projection. It localises to the uropodium. It is found in the cytoskeleton. The protein localises to the perinuclear region. Its subcellular location is the lamellipodium. The protein resides in the cleavage furrow. Involved in regulation of the actin cytoskeleton. May regulate WAS actin-bundling activity. Bridges the interaction between ABL1 and PTPN18 leading to ABL1 dephosphorylation. May play a role as a scaffold protein between PTPN12 and WAS and allow PTPN12 to dephosphorylate WAS. Has the potential to physically couple CD2 and CD2AP to WAS. Acts downstream of CD2 and CD2AP to recruit WAS to the T-cell:APC contact site so as to promote the actin polymerization required for synapse induction during T-cell activation. Down-regulates CD2-stimulated adhesion through the coupling of PTPN12 to CD2. Also has a role in innate immunity and the inflammatory response. Recruited to inflammasomes by MEFV. Induces formation of pyroptosomes, large supramolecular structures composed of oligomerized PYCARD dimers which form prior to inflammatory apoptosis. Binding to MEFV allows MEFV to bind to PYCARD and facilitates pyroptosome formation. Regulates endocytosis and cell migration in neutrophils. This chain is Proline-serine-threonine phosphatase-interacting protein 1 (PSTPIP1), found in Homo sapiens (Human).